Here is a 77-residue protein sequence, read N- to C-terminus: Teretoxin Tsu15.4 (77 aa).

Residues 1 to 21 form the signal peptide; it reads MTKLTVLLLAILVLLPLATSN. Residues 22–40 constitute a propeptide that is removed on maturation; the sequence is SAADEALASLSGLLRRAKR.

In terms of processing, contains 4 disulfide bonds. In terms of tissue distribution, expressed by the venom duct.

The protein resides in the secreted. In Terebra subulata (Chocolate spotted auger), this protein is Teretoxin Tsu15.4.